The sequence spans 473 residues: Cysteine--tRNA ligase (473 aa).

Cysteine 28 is a binding site for Zn(2+). The short motif at 30 to 40 (VTVYDLCHLGH) is the 'HIGH' region element. 3 residues coordinate Zn(2+): cysteine 213, histidine 238, and glutamate 242. Positions 270–274 (KMSKS) match the 'KMSKS' region motif. Lysine 273 is an ATP binding site.

Belongs to the class-I aminoacyl-tRNA synthetase family. As to quaternary structure, monomer. Zn(2+) serves as cofactor.

Its subcellular location is the cytoplasm. It carries out the reaction tRNA(Cys) + L-cysteine + ATP = L-cysteinyl-tRNA(Cys) + AMP + diphosphate. In Blochmanniella pennsylvanica (strain BPEN), this protein is Cysteine--tRNA ligase.